The sequence spans 196 residues: MAGSPEPKSMREQFWDPIAGFGVTFRTMFKKVVTEQYPFDKYPTAPRFHGRHQLNRWPDGLEKCVGCELCAWACPADAIYVEGASNSDDPDGGERFSPGERYGRVYQINYLRCILCGLCIEACPTRALTMTNEYELADDNRADLIYEKSDLLAPLLPGMEQPPHPMRLGDDEGAYYRGEFAAPAPTAPGSSTEAGA.

4Fe-4S ferredoxin-type domains lie at 54-84 (LNRW…VEGA) and 104-133 (RVYQ…MTNE). [4Fe-4S] cluster contacts are provided by cysteine 64, cysteine 67, cysteine 70, cysteine 74, cysteine 113, cysteine 116, cysteine 119, and cysteine 123.

It belongs to the complex I 23 kDa subunit family. In terms of assembly, NDH-1 is composed of 14 different subunits. Subunits NuoA, H, J, K, L, M, N constitute the membrane sector of the complex. [4Fe-4S] cluster is required as a cofactor.

The protein localises to the cell membrane. The enzyme catalyses a quinone + NADH + 5 H(+)(in) = a quinol + NAD(+) + 4 H(+)(out). Functionally, NDH-1 shuttles electrons from NADH, via FMN and iron-sulfur (Fe-S) centers, to quinones in the respiratory chain. The immediate electron acceptor for the enzyme in this species is believed to be ubiquinone. Couples the redox reaction to proton translocation (for every two electrons transferred, four hydrogen ions are translocated across the cytoplasmic membrane), and thus conserves the redox energy in a proton gradient. The protein is NADH-quinone oxidoreductase subunit I of Nocardioides sp. (strain ATCC BAA-499 / JS614).